Reading from the N-terminus, the 458-residue chain is UDP-glycosyltransferase 76G1 (458 aa).

His25 acts as the Proton acceptor in catalysis. His25 contacts rebaudioside A. Position 25 (His25) interacts with rubusoside. Asn27 serves as a coordination point for UDP. Asp124 serves as the catalytic Charge relay. Rebaudioside A contacts are provided by residues 146 to 147 (TS) and His155. UDP contacts are provided by residues Ser283, 338-339 (WV), and 356-364 (HSGWNSTLE). Residues Trp359 and 380–381 (DQ) each bind rebaudioside A.

It belongs to the UDP-glycosyltransferase family. Monomer.

The enzyme catalyses steviolbioside + UDP-alpha-D-glucose = rebaudioside B + UDP + H(+). The catalysed reaction is stevioside + UDP-alpha-D-glucose = rebaudioside A + UDP + H(+). It carries out the reaction rebaudioside E + UDP-alpha-D-glucose = rebaudioside D + UDP + H(+). It catalyses the reaction rebaudioside D + UDP-alpha-D-glucose = rebaudioside M + UDP + H(+). Involved in the biosynthesis of steviol glycosides in leaves. Converts the di-glycoside steviolbioside to the tri-glycoside rebaudioside B. Converts the tri-glycoside stevioside to the tetra-glycoside rebaudioside A. Converts the tetra-glycoside rebaudioside E to the penta-glycoside rebaudioside D. Converts the penta-glycoside rebaudioside D to the hexa-glycoside rebaudioside M. Can glucosylate rubusoside and rebaudioside A in vitro. The chain is UDP-glycosyltransferase 76G1 from Stevia rebaudiana (Stevia).